We begin with the raw amino-acid sequence, 129 residues long: uncharacterized protein (129 aa).

The signal sequence occupies residues Met1–Ala24. The next 2 helical transmembrane spans lie at Ile38–Phe58 and Ile95–Leu115.

It is found in the membrane. This is an uncharacterized protein from Saccharomyces cerevisiae (strain ATCC 204508 / S288c) (Baker's yeast).